Reading from the N-terminus, the 298-residue chain is ATP phosphoribosyltransferase (298 aa).

It belongs to the ATP phosphoribosyltransferase family. Long subfamily. Requires Mg(2+) as cofactor.

Its subcellular location is the cytoplasm. The enzyme catalyses 1-(5-phospho-beta-D-ribosyl)-ATP + diphosphate = 5-phospho-alpha-D-ribose 1-diphosphate + ATP. It participates in amino-acid biosynthesis; L-histidine biosynthesis; L-histidine from 5-phospho-alpha-D-ribose 1-diphosphate: step 1/9. With respect to regulation, feedback inhibited by histidine. Its function is as follows. Catalyzes the condensation of ATP and 5-phosphoribose 1-diphosphate to form N'-(5'-phosphoribosyl)-ATP (PR-ATP). Has a crucial role in the pathway because the rate of histidine biosynthesis seems to be controlled primarily by regulation of HisG enzymatic activity. This chain is ATP phosphoribosyltransferase, found in Aliivibrio fischeri (strain MJ11) (Vibrio fischeri).